A 706-amino-acid polypeptide reads, in one-letter code: Transcription factor 12 (706 aa).

Residues 25 to 109 (AMFSPPVNSG…TPFMNSNLIG (85 aa)) are disordered. Polar residues-rich tracts occupy residues 30-48 (PVNS…QFSG) and 56-76 (GTTS…SRGF). Phosphoserine is present on residues serine 47, serine 67, and serine 79. Residues 81–93 (HYSDHLNDSRLGT) show a composition bias toward basic and acidic residues. Serine 98 is modified (phosphoserine). Lysine 110 participates in a covalent cross-link: Glycyl lysine isopeptide (Lys-Gly) (interchain with G-Cter in SUMO2). Serine 116 and serine 124 each carry phosphoserine. The leucine-zipper stretch occupies residues 119 to 140 (LYSRDSGLSGCQSSLLRQDLGL). Disordered stretches follow at residues 140-222 (LGSP…SMFA) and 249-313 (FGGI…ASHT). A compositionally biased stretch (polar residues) spans 144-163 (AQLSSSGKPGTPYYSFSATS). Residue lysine 181 forms a Glycyl lysine isopeptide (Lys-Gly) (interchain with G-Cter in SUMO2) linkage. The Nuclear localization signal signature appears at 181 to 188 (KKVRKVPP). The segment covering 256 to 269 (STSHMSQSSSYGSL) has biased composition (low complexity). Over residues 282–306 (VSPTDINTSLPPMSSFHRGSTSSSP) the composition is skewed to polar residues. At threonine 313 the chain carries Phosphothreonine. The residue at position 333 (serine 333) is a Phosphoserine. 2 disordered regions span residues 349–392 (PDHT…YENS) and 520–604 (HKTP…ERRM). Over residues 352–363 (TSSSFPSNPSTP) the composition is skewed to low complexity. Polar residues-rich tracts occupy residues 364-376 (VGSP…TSQW) and 383-392 (APSSPSYENS). The residue at position 392 (serine 392) is a Phosphoserine. Composition is skewed to basic and acidic residues over residues 542 to 554 (IKTE…ENLH) and 560 to 575 (DDMK…DIKV). Residue lysine 543 forms a Glycyl lysine isopeptide (Lys-Gly) (interchain with G-Cter in SUMO2) linkage. The residue at position 564 (serine 564) is a Phosphoserine. Lysine 574 participates in a covalent cross-link: Glycyl lysine isopeptide (Lys-Gly) (interchain with G-Cter in SUMO2). Phosphothreonine is present on threonine 581. A phosphoserine mark is found at serine 582 and serine 583. Basic and acidic residues predominate over residues 592–604 (PEQKIEREKERRM). Positions 601 to 654 (ERRMANNARERLRVRDINEAFKELGRMCQLHLKSEKPQTKLLILHQAVAVILSL) constitute a bHLH domain. Glycyl lysine isopeptide (Lys-Gly) (interchain with G-Cter in SUMO2) cross-links involve residues lysine 633 and lysine 677. The class A specific domain stretch occupies residues 656-679 (QQVRERNLNPKAACLKRREEEKVS). Residues 674-706 (EEEKVSAASAEPPNTLPGAHPGLSESTNPMGHL) are disordered. Polar residues predominate over residues 697–706 (SESTNPMGHL).

In terms of assembly, efficient DNA binding requires dimerization with another bHLH protein. Forms homo- or heterooligomers with myogenin, E12 and ITF2 proteins and RUNX1T1. Interacts with PTF1A. Interacts with NEUROD2. Interacts with BHLHA9. Widely expressed.

It localises to the nucleus. Its function is as follows. Transcriptional regulator. Involved in the initiation of neuronal differentiation. Activates transcription by binding to the E box (5'-CANNTG-3'). May be involved in the functional network that regulates the development of the GnRH axis. In Mus musculus (Mouse), this protein is Transcription factor 12 (Tcf12).